A 254-amino-acid polypeptide reads, in one-letter code: Ribosomal RNA small subunit methyltransferase J (254 aa).

Residues 107–108 (RD), 123–124 (ER), and aspartate 174 each bind S-adenosyl-L-methionine.

It belongs to the methyltransferase superfamily. RsmJ family.

It is found in the cytoplasm. It carries out the reaction guanosine(1516) in 16S rRNA + S-adenosyl-L-methionine = N(2)-methylguanosine(1516) in 16S rRNA + S-adenosyl-L-homocysteine + H(+). Its function is as follows. Specifically methylates the guanosine in position 1516 of 16S rRNA. This chain is Ribosomal RNA small subunit methyltransferase J, found in Coxiella burnetii (strain CbuK_Q154) (Coxiella burnetii (strain Q154)).